Reading from the N-terminus, the 346-residue chain is Uracil-DNA glycosylase (346 aa).

The interval 1–105 (MSGKITDFFE…KLKNEEKSEE (105 aa)) is disordered. Residues 20–29 (AENKDNDKEL) are compositionally biased toward basic and acidic residues. Residues 30-42 (TSTTTTTTTTSTT) show a composition bias toward low complexity. Basic residues predominate over residues 43–64 (SKKKVAAAPKKKAAVASKKRKH). Residues 67–86 (SDEETDKEEQQNDDDDDGEE) are compositionally biased toward acidic residues. Asp-186 serves as the catalytic Proton acceptor.

The protein belongs to the uracil-DNA glycosylase (UDG) superfamily. UNG family.

Its subcellular location is the mitochondrion. It is found in the nucleus. It catalyses the reaction Hydrolyzes single-stranded DNA or mismatched double-stranded DNA and polynucleotides, releasing free uracil.. Its function is as follows. Excises uracil residues from the DNA which can arise as a result of misincorporation of dUMP residues by DNA polymerase or due to deamination of cytosine. In Dictyostelium discoideum (Social amoeba), this protein is Uracil-DNA glycosylase (uglA).